The sequence spans 302 residues: Protein translocase subunit SecF (302 aa).

6 helical membrane-spanning segments follow: residues 12-32, 138-158, 166-186, 190-210, 249-269, and 272-292; these read FFIYLSIALILFSVIVIFVKG, YAWYAVIISLIVLLAYITIRF, AILALAHDVIITLGFYSLFGI, LTAIAAFLTLAGYSLNDTIVV, FLVVFMMFLLGGRSIASFAFG, and VGVIIGTYSSLYIASPIVIGM.

It belongs to the SecD/SecF family. SecF subfamily. In terms of assembly, forms a complex with SecD. Part of the essential Sec protein translocation apparatus which comprises SecA, SecYEG and auxiliary proteins SecDF. Other proteins may also be involved.

It localises to the cell inner membrane. Functionally, part of the Sec protein translocase complex. Interacts with the SecYEG preprotein conducting channel. SecDF uses the proton motive force (PMF) to complete protein translocation after the ATP-dependent function of SecA. This is Protein translocase subunit SecF from Petrotoga mobilis (strain DSM 10674 / SJ95).